A 757-amino-acid polypeptide reads, in one-letter code: POU domain, class 2, transcription factor 1 (757 aa).

Disordered regions lie at residues 1–43 (MKLH…QTNG), 271–295 (AATP…SLEE), 375–398 (SLSN…RRKK), and 532–574 (VSSV…TSPL). 2 stretches are compositionally biased toward polar residues: residues 19-43 (RMNN…QTNG) and 275-285 (VQQLPQSQTTP). The POU-specific domain maps to 294–368 (EEPSDLEELE…LLEKWLNDAE (75 aa)). Residues 395-454 (RRKKRTSIETNIRVALEKSFLENQKPTSEEITMIADQLNMEKEVIRVWFCNRRQKEKRIN) constitute a DNA-binding region (homeobox).

This sequence belongs to the POU transcription factor family. Class-2 subfamily.

It localises to the cytoplasm. It is found in the nucleus. Functionally, transcription factor that binds to the octamer motif (5'-ATTTGCAT-3') and activates the promoters of the genes for some small nuclear RNAs (snRNA) and histone H2B. Acts downstream of Notch signaling during radial glia formation. Regulates apoptosis, possibly via an FGF-signaling pathway. The polypeptide is POU domain, class 2, transcription factor 1 (Xenopus tropicalis (Western clawed frog)).